A 757-amino-acid chain; its full sequence is Chloride anion exchanger (757 aa).

Topologically, residues 1 to 71 (MIEAIGNQYV…SWLPAYKIKE (71 aa)) are cytoplasmic. The helical transmembrane segment at 72-92 (WLLSDIVSGISTGLVAVLQGL) threads the bilayer. A topological domain (extracellular) is located at residue Ala-93. A helical transmembrane segment spans residues 94–114 (FALLVNIPPAYGLYAAFFPVI). Over 115–124 (TYFFLGTSRH) the chain is Cytoplasmic. Residues 125–145 (ISVGPFPVLSMMVGVVVTRVA) form a helical membrane-spanning segment. Residues 146–176 (SGSDTSPALSSSSAENDSMIEEKVMVAASVT) are Extracellular-facing. Asn-161 is a glycosylation site (N-linked (GlcNAc...) asparagine). A helical membrane pass occupies residues 177 to 197 (VLSGIIQLLLGVLQIGFVVIY). At 198–201 (LSES) the chain is on the cytoplasmic side. The helical transmembrane segment at 202 to 222 (LISGFTTAAAIHVLVSQLKFM) threads the bilayer. The Extracellular segment spans residues 223 to 250 (LQLTVPAHSDPFSIFKVLESVFSQIQKT). A helical membrane pass occupies residues 251–271 (NIADLVTSVIILVVVFVVKEI). The Cytoplasmic segment spans residues 272 to 278 (NQRYRSK). A helical transmembrane segment spans residues 279 to 299 (LPVPIPIELIMTVIATGISYG). The Extracellular segment spans residues 300–335 (CNFEQRFGVAVVGNMSLGFQPPITPSVEVFQDTIGD). A helical transmembrane segment spans residues 336 to 356 (CFGIAIVGFAVAFSVASVYSL). The Cytoplasmic portion of the chain corresponds to 357 to 367 (KYDYPIDGNQE). A helical transmembrane segment spans residues 368-388 (LIALGVSNIFTGAFKGFAGST). Residues 389 to 404 (ALSRSGVQESTGGKTQ) are Extracellular-facing. A helical membrane pass occupies residues 405 to 425 (VAGLLSAVIVLIVIVAIGFLL). Residues 426–462 (QPLQKSVLAALALGNLKGMLMQFAEIGRLWKKDKYDC) lie on the Cytoplasmic side of the membrane. Residues 463–483 (LIWIMTFIFAIVLGLGLGLAA) form a helical membrane-spanning segment. The Extracellular portion of the chain corresponds to 484 to 757 (SVAFQLLTIV…ECQVPVETKF (274 aa)). One can recognise an STAS domain in the interval 518 to 713 (NYADVYEPEG…LTIHDAILHI (196 aa)). The PDZ-binding signature appears at 754-757 (ETKF).

This sequence belongs to the SLC26A/SulP transporter (TC 2.A.53) family. In terms of assembly, interacts with PDZK1, CFTR, SLC26A6 and NHERF1. Interacts (via PDZ-binding motif) with NHERF4 (via the third PDZ domain); interaction leads to decreased expression of SLC26A3 on the cell membrane resulting in its reduced exchanger activity. N-glycosylation is required for efficient cell surface expression, and protection from proteolytic degradation.

The protein localises to the apical cell membrane. It is found in the membrane. Its subcellular location is the cell membrane. The catalysed reaction is hydrogencarbonate(in) + 2 chloride(out) = hydrogencarbonate(out) + 2 chloride(in). Functionally, mediates chloride-bicarbonate exchange with a chloride bicarbonate stoichiometry of 2:1 in the intestinal epithelia. Plays a role in the chloride and bicarbonate homeostasis during sperm epididymal maturation and capacitation. This is Chloride anion exchanger (Slc26a3) from Rattus norvegicus (Rat).